The chain runs to 268 residues: Undecaprenyl-diphosphatase (268 aa).

A run of 7 helical transmembrane segments spans residues 47–67, 83–103, 109–129, 144–164, 184–204, 218–238, and 246–266; these read FAVL…FAKL, FVIG…VAGS, LFNP…LLWV, FPLP…IPGV, AAEF…VYDF, IVAI…KTFL, and FELF…ALAM.

Belongs to the UppP family.

It localises to the cell inner membrane. It catalyses the reaction di-trans,octa-cis-undecaprenyl diphosphate + H2O = di-trans,octa-cis-undecaprenyl phosphate + phosphate + H(+). In terms of biological role, catalyzes the dephosphorylation of undecaprenyl diphosphate (UPP). Confers resistance to bacitracin. The sequence is that of Undecaprenyl-diphosphatase from Rhodopseudomonas palustris (strain BisB5).